We begin with the raw amino-acid sequence, 1410 residues long: Slit homolog 1 protein (1410 aa).

Positions 1-16 (MLICFIFILLIPESAT) are cleaved as a signal peptide. The region spanning 17–43 (CPAECVCVDRTVSCVGQQLTEVPQNIP) is the LRRNT 1 domain. LRR repeat units follow at residues 22 to 42 (VCVD…PQNI), 43 to 66 (PNDT…DFSS), 67 to 90 (LMNL…SFSS), 91 to 114 (LVFL…VFQN), 116 to 138 (LKLT…QLQG), 140 to 162 (EFLE…VISS), 163 to 186 (WVSL…SNAR), 219 to 242 (TVCA…FMTC), 286 to 309 (PPST…SFKN), 310 to 333 (LKNL…AFLG), 335 to 357 (HNLH…TFEG), 358 to 381 (LGSL…TFDH), 383 to 405 (PKLS…TFQN), 407 to 430 (TSLS…WLAQ), 442 to 465 (ARCE…KFKC), 489 to 510 (CDCY…PTSI), 511 to 535 (PRFA…NIHV), 536 to 559 (LENL…SFEK), 561 to 583 (SKLR…VLDE), and 585 to 607 (SNLE…FFNK). Residues 195 to 243 (NPWNCDCRLRWMRKWLEKAEGQNKTVCATPLNLQGSSIEILQDKFMTCS) enclose the LRRCT 1 domain. The LRRNT 2 domain occupies 259 to 286 (ICPLPCTCTGTTVDCRDSGLTYVPTNLP). One can recognise an LRRCT 2 domain in the interval 417–466 (NPLICDCNLQWLAQINLQKNIETSGARCEQPKRLRKKKFATLPPNKFKCK). In terms of domain architecture, LRRNT 3 spans 484–511 (ICPTQCDCYGTTVDCNKRGLNTIPTSIP). Positions 619–671 (NDLLCDCRILPLMSWLRSNSSHSIDIPPCQQFQYSDNESDKQRCAAFPEETCS) constitute an LRRCT 3 domain. Residues 677–703 (CPPKCSCLDRVVRCSNKNLTSFPSRIP) form the LRRNT 4 domain. 6 LRR repeats span residues 681–703 (CSCL…SRIP), 704–726 (FDTT…DLNR), 727–750 (LYSL…TFSN), 752–774 (TRLS…AFNG), 775–798 (LNAL…AFSN), and 800–823 (TSIT…WFSK). The 50-residue stretch at 810-859 (NSLYCDCNMAWFSKWIKSKFIEAGIARCEYPNTVSNQLLLTAQPYQFTCD) folds into the LRRCT 4 domain. EGF-like domains follow at residues 871 to 906 (DLCL…VHCE) and 908 to 945 (QIDA…DYCE). 18 disulfides stabilise this stretch: Cys873/Cys884, Cys878/Cys894, Cys896/Cys905, Cys912/Cys923, Cys917/Cys933, Cys935/Cys944, Cys951/Cys962, Cys956/Cys971, Cys973/Cys982, Cys989/Cys1002, Cys996/Cys1011, Cys1013/Cys1022, Cys1029/Cys1040, Cys1034/Cys1049, Cys1051/Cys1060, Cys1076/Cys1086, Cys1081/Cys1097, and Cys1099/Cys1108. In terms of domain architecture, EGF-like 1; calcium-binding spans 947 to 983 (NIDDCVNSKCENGGKCVDLINSYRCDCPMEYEGKHCE). The EGF-like 3 domain maps to 985–1023 (KLEYCTKKLNPCENNGKCIPINGSYSCMCSPGFTGNNCE). Residues 1025-1061 (NIDDCKNVECQNGGSCVDGILSYDCLCRPGYAGQYCE) enclose the EGF-like 2; calcium-binding domain. The EGF-like 4 domain occupies 1072–1109 (KTDACQQSACGQGECVASQNSSDFTCKCHEGFSGPSCD). Positions 1112-1285 (MSVGFKNPGA…LENVNTEQSC (174 aa)) constitute a Laminin G-like domain. One copy of the LRR 27 repeat lies at 1197–1221 (TSERKCFLQIDKNPVQIVENSGKSD). 8 disulfides stabilise this stretch: Cys1259-Cys1285, Cys1292-Cys1302, Cys1297-Cys1314, Cys1316-Cys1325, Cys1332-Cys1368, Cys1346-Cys1382, Cys1357-Cys1398, and Cys1361-Cys1400. Positions 1288 to 1326 (TVNFCAGIDCGNGKCTNNALSPKGYMCQCDSHFSGEHCD) constitute an EGF-like 5 domain. The 75-residue stretch at 1332 to 1406 (CDKQKFRRHH…QCQCEPTKSV (75 aa)) folds into the CTCK domain.

As to quaternary structure, interacts with eva-1.

The protein localises to the secreted. Functions as a ligand for sax-3 receptor during larval development. Acts via the sax-3/Robo receptor to direct ventral axon guidance and guidance at the midline during embryonic development. The sequence is that of Slit homolog 1 protein (slt-1) from Caenorhabditis elegans.